The primary structure comprises 353 residues: Protein pelota homolog (353 aa).

Belongs to the eukaryotic release factor 1 family. Pelota subfamily. In terms of assembly, monomer. The cofactor is a divalent metal cation.

The protein localises to the cytoplasm. Its function is as follows. May function in recognizing stalled ribosomes, interact with stem-loop structures in stalled mRNA molecules, and effect endonucleolytic cleavage of the mRNA. May play a role in the release non-functional ribosomes and degradation of damaged mRNAs. Has endoribonuclease activity. This chain is Protein pelota homolog, found in Methanopyrus kandleri (strain AV19 / DSM 6324 / JCM 9639 / NBRC 100938).